The following is a 566-amino-acid chain: Proline--tRNA ligase (566 aa).

Belongs to the class-II aminoacyl-tRNA synthetase family. ProS type 1 subfamily. In terms of assembly, homodimer.

It is found in the cytoplasm. The catalysed reaction is tRNA(Pro) + L-proline + ATP = L-prolyl-tRNA(Pro) + AMP + diphosphate. Functionally, catalyzes the attachment of proline to tRNA(Pro) in a two-step reaction: proline is first activated by ATP to form Pro-AMP and then transferred to the acceptor end of tRNA(Pro). As ProRS can inadvertently accommodate and process non-cognate amino acids such as alanine and cysteine, to avoid such errors it has two additional distinct editing activities against alanine. One activity is designated as 'pretransfer' editing and involves the tRNA(Pro)-independent hydrolysis of activated Ala-AMP. The other activity is designated 'posttransfer' editing and involves deacylation of mischarged Ala-tRNA(Pro). The misacylated Cys-tRNA(Pro) is not edited by ProRS. The protein is Proline--tRNA ligase of Bacillus cytotoxicus (strain DSM 22905 / CIP 110041 / 391-98 / NVH 391-98).